Reading from the N-terminus, the 282-residue chain is PTS system sorbose-specific EIID component (282 aa).

The PTS EIID domain maps to 13-281 (TKITKGDMFK…GIVGYWLGIL (269 aa)). 4 helical membrane-spanning segments follow: residues 135-155 (LGAS…FVAF), 197-217 (GLFI…PLVV), 234-254 (ILDQ…CMYL), and 261-281 (PILL…LGIL).

It localises to the cell membrane. The phosphoenolpyruvate-dependent sugar phosphotransferase system (PTS), a major carbohydrate active transport system, catalyzes the phosphorylation of incoming sugar substrates concomitant with their translocation across the cell membrane. The enzyme II SorABCD PTS system is involved in L-sorbose transport. This chain is PTS system sorbose-specific EIID component, found in Lacticaseibacillus casei (Lactobacillus casei).